The chain runs to 27 residues: Caerulein precursor fragment R8 (27 aa).

In terms of tissue distribution, expressed by the skin glands.

It localises to the secreted. Functionally, antimicrobial peptide. The polypeptide is Caerulein precursor fragment R8 (Xenopus ruwenzoriensis (Uganda clawed frog)).